The sequence spans 334 residues: Phenazine-1-carboxylate N-methyltransferase (334 aa).

S-adenosyl-L-methionine is bound by residues Asp198 and Arg241.

The protein belongs to the class I-like SAM-binding methyltransferase superfamily. Cation-independent O-methyltransferase family. Homodimer in solution. Probably interacts transiently with PhzS.

The catalysed reaction is phenazine-1-carboxylate + S-adenosyl-L-methionine = 5-methyl-phenazine-1-carboxylate + S-adenosyl-L-homocysteine. It participates in secondary metabolite biosynthesis; pyocyanine biosynthesis. With respect to regulation, in vitro, requires PhzS for activity. In terms of biological role, involved in the biosynthesis of pyocyanine, a blue-pigmented phenazine derivative, which plays a role in virulence. Converts phenazine-1-carboxylate (PCA) to 5-methylphenazine-1-carboxylate (5-methyl-PCA). This chain is Phenazine-1-carboxylate N-methyltransferase, found in Pseudomonas aeruginosa (strain ATCC 15692 / DSM 22644 / CIP 104116 / JCM 14847 / LMG 12228 / 1C / PRS 101 / PAO1).